Reading from the N-terminus, the 24-residue chain is Xenoposin-precursor fragment B1 (24 aa).

In terms of tissue distribution, expressed by the skin glands.

It is found in the secreted. Has antibacterial activity. This Xenopus borealis (Kenyan clawed frog) protein is Xenoposin-precursor fragment B1.